Reading from the N-terminus, the 214-residue chain is Methyltransferase HEMK2 (214 aa).

S-adenosyl-L-homocysteine-binding residues include Thr29, Glu51, Gly53, Asp77, Asp103, Leu104, and Asn122. Thr29, Glu51, Gly53, Asp77, Asp103, Leu104, and Asn122 together coordinate S-adenosyl-L-methionine. Asn122 is an a protein binding site.

Belongs to the eukaryotic/archaeal PrmC-related family. As to quaternary structure, heterodimer; heterodimerization with TRMT112 is required for S-adenosyl-L-methionine-binding. Does not interact with TRMT112. In terms of processing, ubiquitinated, leading to its degradation by the proteasome. In terms of tissue distribution, widely expressed, with highest expression in parathyroid and pituitary glands, followed by adrenal gland and kidney, and lowest expression in leukocytes and mammary gland.

The protein resides in the nucleus. It catalyses the reaction L-lysyl-[histone] + S-adenosyl-L-methionine = N(6)-methyl-L-lysyl-[histone] + S-adenosyl-L-homocysteine + H(+). The catalysed reaction is L-glutaminyl-[protein] + S-adenosyl-L-methionine = N(5)-methyl-L-glutaminyl-[protein] + S-adenosyl-L-homocysteine + H(+). It carries out the reaction methylarsonous acid + S-adenosyl-L-methionine = dimethylarsinate + S-adenosyl-L-homocysteine + 2 H(+). Functionally, methyltransferase that can methylate proteins and, to a lower extent, arsenic. Catalytic subunit of a heterodimer with TRMT112, which monomethylates 'Lys-12' of histone H4 (H4K12me1), a modification present at the promoters of numerous genes encoding cell cycle regulators. Catalytic subunit of a heterodimer with TRMT112, which catalyzes N5-methylation of Glu residue of proteins with a Gly-Gln-Xaa-Xaa-Xaa-Arg motif. Methylates ETF1 on 'Gln-185'; ETF1 needs to be complexed to ERF3 in its GTP-bound form to be efficiently methylated. May also play a role in the modulation of arsenic-induced toxicity by mediating the conversion of monomethylarsonous acid (3+) into the less toxic dimethylarsonic acid. It however only plays a limited role in arsenic metabolism compared with AS3MT. The polypeptide is Methyltransferase HEMK2 (Homo sapiens (Human)).